Consider the following 868-residue polypeptide: MASLENLVARYQRCFNDQSLKNSTIELEIRFQHINFLLFKTVYEALVAQEIPSTISHSIRCIKKVHHENHCREKILPSDNFYFKKQPLMFFKFSEPASLGCKVSLAIEQPIRKFILDSSVLVRLKNRTTFQISDLWKIELTVVKQLMGSEVSAKLTAFKTLLFDTPEQQTAKNMMTLINPDDEYLYEIEIEYTGKPESLTAADVIKIKNTVLTLISPNHLMLTAYHQAIEFIASHILSSEILLARIKSGKWGLKRLLPQVKSMTKADYMKFYPPVGYYVTDKADGIRGIAVIQDTQMYVVADQLYSLGTTGIEPLKPTILDGEFMPEKKEFYGFDVIMYEGNLLTQQGFETRIEALNKGIKVLQAFNIKAEMKPFISLTSADPNVLLKNFESVFKKKTRPYSIDGIILVEPGNSYLNTNTFKWKPTWDNTLDFLVRKCPESLNVPEYAPKKGFSLHLLFVGISGELFKKLALNWCPGYTKLFPVTQRNQNYFPVQFQPSDFPLAFLYYHPDTSSFSDIDGKVLEMRCLKREVNYVSWEIVKIREDRQQDLKTGGYFGNDFKTAELTWLNYMDPFSFEELAKGPSGMYFAGAKTGIYRAQTALISFIKQEIIQKISHQSWVIDLGIGKGQDLGRYLDAGIRHLVGIDKDQTALAELIYRKFSHATTRQHKHATNIYVLHQDLAEPAKEISEKVHQIYGFPKEGASSIVSNLFIHYLMKSSQQVENLAVLCHKLLQPGGMVWFTTMLGERVLELLHENRVELNEVWEARENEVVKFAIKRLFKEDVLQETGQEIGVLLPFSNGDFYNEYLVNTAFLIKIFKHHGFSLVQMQSFKDWIPEFQTFSKSLYKILTEADKTWTSLFGFICLRKN.

The active-site N6-GMP-lysine intermediate is K282. In terms of domain architecture, mRNA cap 0 methyltransferase spans 594 to 868 (GIYRAQTALI…LFGFICLRKN (275 aa)). S-adenosyl-L-methionine is bound by residues K607, G624, D646, and 710–712 (LFI).

This sequence in the N-terminal section; belongs to the dsDNA virus mRNA guanylyltransferase family. It in the C-terminal section; belongs to the class I-like SAM-binding methyltransferase superfamily. mRNA cap 0 methyltransferase family. In terms of assembly, part of the viral DNA-directed RNA polymerase that consists of 8 polII-like subunits (RPB1, RPB2, RPB3, RPB5, RPB6, RPB7, RPB9, RPB10), a capping enzyme and a termination factor.

The protein resides in the virion. It carries out the reaction a 5'-end triphospho-ribonucleoside in mRNA + H2O = a 5'-end diphospho-ribonucleoside in mRNA + phosphate + H(+). The catalysed reaction is a 5'-end diphospho-ribonucleoside in mRNA + GTP + H(+) = a 5'-end (5'-triphosphoguanosine)-ribonucleoside in mRNA + diphosphate. It catalyses the reaction a 5'-end (5'-triphosphoguanosine)-ribonucleoside in mRNA + S-adenosyl-L-methionine = a 5'-end (N(7)-methyl 5'-triphosphoguanosine)-ribonucleoside in mRNA + S-adenosyl-L-homocysteine. It functions in the pathway mRNA processing; mRNA capping. Its function is as follows. Probably catalyzes the second reaction in the mRNA cap formation pathway. Forms a covalent complex with GTP. The chain is mRNA-capping enzyme from Ornithodoros (relapsing fever ticks).